The sequence spans 442 residues: Divalent metal cation transporter MntH (442 aa).

11 consecutive transmembrane segments (helical) span residues 29 to 49 (MLAY…PGNW), 62 to 82 (TLLT…SLCV), 106 to 126 (FCLW…ELLG), 135 to 155 (FVIP…VLLF), 166 to 186 (ALVI…ILFS), 209 to 229 (MLYI…LYLH), 258 to 278 (FALS…AATF), 295 to 315 (LLSP…ALLA), 347 to 367 (LITR…FGEN), 372 to 392 (LIVL…IPLV), and 413 to 433 (LAWL…LQSL).

It belongs to the NRAMP family.

The protein localises to the cell inner membrane. Its function is as follows. H(+)-stimulated, divalent metal cation uptake system. In Nostoc sp. (strain PCC 7120 / SAG 25.82 / UTEX 2576), this protein is Divalent metal cation transporter MntH.